A 140-amino-acid chain; its full sequence is Beta/delta-urticatoxin-De2a (140 aa).

Positions 1 to 18 are cleaved as a signal peptide; it reads MKTSTALVLLLALTATSA. A propeptide spanning residues 19–78 is cleaved from the precursor; sequence SSGDHQFIDEQNIMNVAEGKNVISSLSSSGGGDDAAAIMESVLVNGGNRKMVFMMVSGSQ. Disulfide bonds link Cys81-Cys95, Cys88-Cys100, Cys94-Cys108, Cys113-Cys127, Cys120-Cys131, and Cys126-Cys139.

Belongs to the urticatoxin-2 family. In terms of tissue distribution, expressed in trichomes, that are stiff epidermal hairs located on the surface of petioles and leaves.

It localises to the secreted. Its function is as follows. Plant defense neurotoxin that causes pain and systemic symptoms in mammals via modulation of voltage-gated sodium channels (Nav). Potent modulator of human Nav1.5/SCN5A (EC(50)=55 nM), Nav1.6/SCN8A (EC(50)=0.86 nM), and Nav1.7/SCN9A (EC(50)=208 nM), where it shifts the activation threshold to more negative potentials and delays fast inactivation. Also shifts the voltage-dependence of steady-state fast inactivation of Nav1.6/SCN8A, but not that of Nav1.5/SCN5A or Nav1.7/SCN9A. On Nav1.7/SCN9A, principally acts by binding to extracellular loops of domain IV (Nav site 3). In vivo, intraplantar injection into mice causes numerous dose-dependent, immediate, and long-lasting spontaneous pain behaviors, while no swelling is observed in the injected paw. At the highest doses tested, systemic symptoms including hypokinesia and hypersalivation are observed. This is Beta/delta-urticatoxin-De2a from Dendrocnide excelsa (Giant stinging tree).